Consider the following 190-residue polypeptide: dTTP/UTP pyrophosphatase (190 aa).

Residue Asp-71 is the Proton acceptor of the active site.

This sequence belongs to the Maf family. YhdE subfamily. A divalent metal cation serves as cofactor.

The protein resides in the cytoplasm. The enzyme catalyses dTTP + H2O = dTMP + diphosphate + H(+). It catalyses the reaction UTP + H2O = UMP + diphosphate + H(+). Its function is as follows. Nucleoside triphosphate pyrophosphatase that hydrolyzes dTTP and UTP. May have a dual role in cell division arrest and in preventing the incorporation of modified nucleotides into cellular nucleic acids. In Xanthomonas campestris pv. campestris (strain ATCC 33913 / DSM 3586 / NCPPB 528 / LMG 568 / P 25), this protein is dTTP/UTP pyrophosphatase.